Here is a 454-residue protein sequence, read N- to C-terminus: tRNA modification GTPase MnmE (454 aa).

3 residues coordinate (6S)-5-formyl-5,6,7,8-tetrahydrofolate: Arg23, Glu80, and Lys120. A TrmE-type G domain is found at 216-377; sequence GMKVVIAGRP…LRNHLKQSMG (162 aa). K(+) is bound at residue Asn226. GTP-binding positions include 226 to 231, 245 to 251, 270 to 273, 335 to 338, and 358 to 360; these read NAGKSS, TDIAGTT, DTAG, NKAD, and SAR. Ser230 contributes to the Mg(2+) binding site. Residues Thr245, Ile247, and Thr250 each coordinate K(+). Thr251 lines the Mg(2+) pocket. Lys454 is a (6S)-5-formyl-5,6,7,8-tetrahydrofolate binding site.

It belongs to the TRAFAC class TrmE-Era-EngA-EngB-Septin-like GTPase superfamily. TrmE GTPase family. As to quaternary structure, homodimer. Heterotetramer of two MnmE and two MnmG subunits. Requires K(+) as cofactor.

Its subcellular location is the cytoplasm. Exhibits a very high intrinsic GTPase hydrolysis rate. Involved in the addition of a carboxymethylaminomethyl (cmnm) group at the wobble position (U34) of certain tRNAs, forming tRNA-cmnm(5)s(2)U34. The sequence is that of tRNA modification GTPase MnmE from Salmonella arizonae (strain ATCC BAA-731 / CDC346-86 / RSK2980).